A 250-amino-acid chain; its full sequence is UPF0494 membrane protein PB2B2.07c (250 aa).

3 consecutive transmembrane segments (helical) span residues 98–118 (WPLL…NFEV), 144–164 (IAIY…MFPL), and 179–199 (MIIA…GATI).

Belongs to the UPF0494 family.

It localises to the cytoplasm. The protein resides in the endoplasmic reticulum. It is found in the golgi apparatus. Its subcellular location is the membrane. The protein is UPF0494 membrane protein PB2B2.07c of Schizosaccharomyces pombe (strain 972 / ATCC 24843) (Fission yeast).